We begin with the raw amino-acid sequence, 225 residues long: Cytidylate kinase (225 aa).

11–19 (GPAAAGKST) is an ATP binding site.

It belongs to the cytidylate kinase family. Type 1 subfamily.

The protein resides in the cytoplasm. It catalyses the reaction CMP + ATP = CDP + ADP. The enzyme catalyses dCMP + ATP = dCDP + ADP. This chain is Cytidylate kinase, found in Anoxybacillus flavithermus (strain DSM 21510 / WK1).